The following is a 71-amino-acid chain: Ribosome modulation factor (71 aa).

The protein belongs to the ribosome modulation factor family.

It is found in the cytoplasm. During stationary phase, converts 70S ribosomes to an inactive dimeric form (100S ribosomes). The sequence is that of Ribosome modulation factor from Pseudomonas savastanoi pv. phaseolicola (strain 1448A / Race 6) (Pseudomonas syringae pv. phaseolicola (strain 1448A / Race 6)).